Here is a 353-residue protein sequence, read N- to C-terminus: Rhodopsin (353 aa).

Topologically, residues 1-36 (MNGTEGPYFYVPMVNTSGIVRSPYEYPQYYLVNPAA) are extracellular. N2 and N15 each carry an N-linked (GlcNAc...) asparagine glycan. The chain crosses the membrane as a helical span at residues 37-61 (YAALGAYMFLLILVGFPINFLTLYV). At 62-73 (TIEHKKLRTPLN) the chain is on the cytoplasmic side. The chain crosses the membrane as a helical span at residues 74-96 (YILLNLAVADLFMVFGGFTTTMY). The Extracellular portion of the chain corresponds to 97–110 (TSMHGYFVLGRLGC). C110 and C187 are joined by a disulfide. The chain crosses the membrane as a helical span at residues 111 to 133 (NIEGFFATLGGEIALWSLVVLAI). A 'Ionic lock' involved in activated form stabilization motif is present at residues 134–136 (ERW). Residues 134 to 152 (ERWVVVCKPISNFRFGENH) are Cytoplasmic-facing. The chain crosses the membrane as a helical span at residues 153–173 (AIMGLAFTWLMAMACAAPPLV). The Extracellular portion of the chain corresponds to 174 to 202 (GWSRYIPEGMQCSCGIDYYTRAEGFNNES). N200 carries N-linked (GlcNAc...) asparagine glycosylation. A helical membrane pass occupies residues 203-224 (FVIYMFVCHFLIPLMVVFFCYG). Topologically, residues 225–252 (RLLCAVKEAAAAQQESETTQRAEREVTR) are cytoplasmic. Residues 253–274 (MVVIMVIAFLICWCPYAGVAWW) traverse the membrane as a helical segment. At 275–286 (IFTHQGSDFGPV) the chain is on the extracellular side. A helical membrane pass occupies residues 287-308 (FMTIPAFFAKSSSIYNPMIYIC). The residue at position 296 (K296) is an N6-(retinylidene)lysine. The Cytoplasmic portion of the chain corresponds to 309 to 353 (LNKQFRHCMITTLCCGKNPFEEEEGASTASKTEASSVSSSSVSPA). S-palmitoyl cysteine attachment occurs at residues C322 and C323. Residues 331 to 353 (EEGASTASKTEASSVSSSSVSPA) form a disordered region. Positions 334–353 (ASTASKTEASSVSSSSVSPA) are enriched in low complexity.

Belongs to the G-protein coupled receptor 1 family. Opsin subfamily. Post-translationally, phosphorylated on some or all of the serine and threonine residues present in the C-terminal region. In terms of processing, contains one covalently linked retinal chromophore.

It localises to the membrane. It is found in the cell projection. The protein localises to the cilium. The protein resides in the photoreceptor outer segment. Photoreceptor required for image-forming vision at low light intensity. While most salt water fish species use retinal as chromophore, most freshwater fish use 3-dehydroretinal, or a mixture of retinal and 3-dehydroretinal. Light-induced isomerization of 11-cis to all-trans retinal triggers a conformational change that activates signaling via G-proteins. Subsequent receptor phosphorylation mediates displacement of the bound G-protein alpha subunit by arrestin and terminates signaling. This Lithognathus mormyrus (Striped seabream) protein is Rhodopsin (rho).